The sequence spans 225 residues: Claudin-17 (225 aa).

Over 1-7 the chain is Cytoplasmic; that stretch reads MAFYPLQ. Residues 8–28 form a helical membrane-spanning segment; sequence IAGLVLGFLGMVGTLATTLLP. Over 29–81 the chain is Extracellular; sequence QWRVSAFIGSNIIVFERIWEGLWMNCVRQAKARLQCKFYSSMLALSPALEAAR. Residues 82–102 traverse the membrane as a helical segment; the sequence is ALMCVAVALSLIALIIGICGM. Topologically, residues 103–124 are cytoplasmic; sequence KKIQCTGSNERAKAYLLGTSGV. The helical transmembrane segment at 125 to 145 threads the bilayer; the sequence is LFILTGIFVLIPVCWTANIII. The Extracellular segment spans residues 146 to 164; it reads RDFYNPAVHVGQKRELGAA. Residues 165 to 185 form a helical membrane-spanning segment; it reads LFLGWASVAVLFIAGGLLCGF. The Cytoplasmic portion of the chain corresponds to 186-225; sequence CCCNRKKQRDGYPAPRPSMPRTDERRRNMTRQSETPTSYV. Residues 194–225 are disordered; sequence RDGYPAPRPSMPRTDERRRNMTRQSETPTSYV. Residues 215 to 225 show a composition bias toward polar residues; that stretch reads TRQSETPTSYV.

It belongs to the claudin family. In terms of assembly, does not form homotypic polymeric strands and it is not sufficient to form tight junctions by its own. Interacts with OCLN.

The protein resides in the cell junction. The protein localises to the tight junction. It localises to the cell membrane. The catalysed reaction is chloride(in) = chloride(out). It catalyses the reaction hydrogencarbonate(in) = hydrogencarbonate(out). The enzyme catalyses bromide(in) = bromide(out). It carries out the reaction iodide(out) = iodide(in). The catalysed reaction is fluoride(in) = fluoride(out). It catalyses the reaction nitrate(in) = nitrate(out). The enzyme catalyses thiocyanate(in) = thiocyanate(out). Functionally, channel-forming tight junction protein with selectivity for anions, including chloride and hydrogencarbonate, and for solutes smaller than 9 Angstrom in diameter. In the kidney proximal tubule, may be involved in quantitative reabsorption of filtered anions. Does not affect water permeability. The sequence is that of Claudin-17 (CLDN17) from Sus scrofa (Pig).